The primary structure comprises 304 residues: MTLRQAIDLAAALLAEAGVDSARCDAEQLAAHLAGTDRGRLPLFEPPGDEFFGRYRDIVTARARRVPLQHLIGTVSFGPVVLHVGPGVFVPRPETEAILAWATAQSLPARPLIVDACTGSGALAVALAQHRANLGLKARIIGIDDSDCALDYARRNAAGTPVELVRADVTTPRLLPELDGQVDLMVSNPPYIPDAAVLEPEVAQHDPHHALFGGPDGMTVISAVVGLAGRWLRPGGLFAVEHDDTTSSSTVDLVSSTKLFVDVQARKDLAGRPRFVTAMRWGHLPLAGENGAIDPRQRRCRAKR.

S-adenosyl-L-methionine is bound by residues aspartate 144 and asparagine 188. 188–191 (NPPY) contributes to the substrate binding site.

Belongs to the protein N5-glutamine methyltransferase family. PrmC subfamily.

The catalysed reaction is L-glutaminyl-[peptide chain release factor] + S-adenosyl-L-methionine = N(5)-methyl-L-glutaminyl-[peptide chain release factor] + S-adenosyl-L-homocysteine + H(+). Methylates the class 1 translation termination release factors RF1/PrfA and RF2/PrfB on the glutamine residue of the universally conserved GGQ motif. The chain is Release factor glutamine methyltransferase from Mycobacterium tuberculosis (strain ATCC 25618 / H37Rv).